A 2620-amino-acid chain; its full sequence is Highly reducing polyketide synthase tazB (2620 aa).

Residues 1–22 (MPFLNGNTTHHEAHSAEPDHGN) are disordered. The Ketosynthase family 3 (KS3) domain occupies 1–416 (MPFLNGNTTH…GTNAHCILDD (416 aa)). The span at 9–22 (THHEAHSAEPDHGN) shows a compositional bias: basic and acidic residues. Active-site for beta-ketoacyl synthase activity residues include C166, H301, and H340. The segment at 460–481 (GFNKFDEPRGSDSAGSNANGSH) is disordered. Low complexity predominate over residues 470-481 (SDSAGSNANGSH). The tract at residues 601-923 (VFTGQGAQYA…PYLATLSRKD (323 aa)) is malonyl-CoA:ACP transacylase (MAT) domain. Residues 993-1128 (HDLFGAPVPD…GEVSPDLKKS (136 aa)) form an N-terminal hotdog fold region. Residues 993–1313 (HDLFGAPVPD…LAGIRLSPFK (321 aa)) form a dehydratase (DH) domain region. The 326-residue stretch at 993–1318 (HDLFGAPVPD…LSPFKPESSE (326 aa)) folds into the PKS/mFAS DH domain. H1025 serves as the catalytic Proton acceptor; for dehydratase activity. A C-terminal hotdog fold region spans residues 1157 to 1318 (TAPVDFTPVY…LSPFKPESSE (162 aa)). The Proton donor; for dehydratase activity role is filled by D1225. The methyltransferase (CMet) domain stretch occupies residues 1379-1680 (GLRESREMKD…VDFEASSSIY (302 aa)). The interval 1910-2227 (GIDSLTWVTD…TGKSIGKVTL (318 aa)) is enoyl reductase (ER) domain. The segment at 2251–2425 (SFILAGGLGG…HGASVNLGAV (175 aa)) is ketoreductase (KR) domain. The 82-residue stretch at 2539–2620 (EAARIIHKAL…VSLSSFTKFR (82 aa)) folds into the Carrier domain. O-(pantetheine 4'-phosphoryl)serine is present on S2576.

It functions in the pathway secondary metabolite biosynthesis. Its function is as follows. Highly reducing polyketide synthase; part of the gene cluster that mediates the biosynthesis of azaterrilone A and other azaphilones, a class of fungal metabolites characterized by a highly oxygenated pyrano-quinone bicyclic core and exhibiting a broad range of bioactivities. The first step of the pathway begins with the non-reducing polyketide synthase tazA that assembles one acetyl-CoA starter unit, five malonyl-CoA units, and catalyzes a series of Claisen condensations, methylation, PT-mediated cyclization, and finally releases the first hexaketide precursor through the R-domain. The tazA product then undergoes reduction on its terminal ketone and the following pyran-ring formation by yet undetermined enzyme(s). Dehydration and enoyl reduction, possibly involving the trans-enoyl reductase tazE leads to the next intermediate. TazD is predicted as an acetyltransferase and might catalyze the acetylation steps leading to the synthesis of azaterrilone A. Azaterrilone A is not the final product of the taz pathway and both the highly reducing polyketide synthase tazB and the dual enzyme tazHJ catalyze late steps of the pathway, leading to the production of the 2 final stereoisomers that contain additional polyketide modification whose structures have still to be determined. This chain is Highly reducing polyketide synthase tazB, found in Aspergillus terreus (strain NIH 2624 / FGSC A1156).